The primary structure comprises 127 residues: Large ribosomal subunit protein eL18 (127 aa).

Belongs to the eukaryotic ribosomal protein eL18 family.

The protein is Large ribosomal subunit protein eL18 of Methanopyrus kandleri (strain AV19 / DSM 6324 / JCM 9639 / NBRC 100938).